Reading from the N-terminus, the 557-residue chain is MSDIEIAQRAKMLPIIDLAREKLGIPAASLDPYGHYKAKVALDYIDGLKDRPDGKLILVTAISPTPAGEGKTTTTVGLGDALNRIGKKTVMCLREPSLGPCFGVKGGAAGGGHAQVVPMEDINLHFTGDFHAVGVAHNLLSALIDNHINHGNALDIDPRRIQWKRVVDMNDRALRKIVVGMGGTANGYLREDGFDIVVASEVMAILCLATSMADLKERLGRIIVGYKSDGKTPVYARDLKAHGAMAALLKDAIKPNLVQTLENNLAIIHGGPFANIAHGCNTVTATQTALKLADYVVTEAGFGADLGAEKFIDIKCRMAGLNPAAVVLVATVRALKFHGGVKKEDLNQENLAALEAGFANLERHVHNIREHYGLPCVVSINHFSFDTEAEIAWLMKKCEALGVKAVLARHWAEGGKGAEALARTVADIVDHQPGRHTFVYGDEATLWNKIETIATKIYGAAGISADAKVKAQLEAWNADYGHYPVCMAKTQMSFSTDPNAKGAPSGHTVAIREVRLANGAGFVVAIAGDMMTMPGLPKVPAAEHIDVDDDGRISGLF.

65 to 72 (TPAGEGKT) contacts ATP.

This sequence belongs to the formate--tetrahydrofolate ligase family.

The enzyme catalyses (6S)-5,6,7,8-tetrahydrofolate + formate + ATP = (6R)-10-formyltetrahydrofolate + ADP + phosphate. The protein operates within one-carbon metabolism; tetrahydrofolate interconversion. The polypeptide is Formate--tetrahydrofolate ligase (Methylococcus capsulatus (strain ATCC 33009 / NCIMB 11132 / Bath)).